A 382-amino-acid polypeptide reads, in one-letter code: Norsolorinic acid reductase B (382 aa).

Position 64 (Asp64) interacts with NADP(+). Tyr69 functions as the Proton donor in the catalytic mechanism. His143 lines the substrate pocket. Residues 173-174 (SD), Gln199, 228-238 (GVLNQGRFRTE), and 302-310 (RKVDHLTGV) each bind NADP(+).

Belongs to the aldo/keto reductase family. Aldo/keto reductase 2 subfamily.

The protein operates within mycotoxin biosynthesis; aflatoxin biosynthesis. Norsolorinic acid reductase; part of the gene cluster that mediates the biosynthesis of aflatoxins, a group of polyketide-derived furanocoumarins, and part of the most toxic and carcinogenic compounds among the known mycotoxins. The four major aflatoxins produced by A.parasiticus are aflatoxin B1 (AFB1), aflatoxin B2 (AFB2), aflatoxin G1 (AFG1) and aflatoxin G2 (AFG2). Within the aflatoxin pathway, the norsolorinic acid reductase aflE may play a role in the conversion of norsolorinic acid (NOR) to averantin (AVN). The biosynthesis of aflatoxins begins with the norsolorinic acid synthase aflC that combines a hexanoyl starter unit produced by the fatty acid synthase aflA/aflB and 7 malonyl-CoA extender units to synthesize the precursor NOR. The second step is the conversion of NOR to averantin and requires the norsolorinic acid ketoreductase aflD, which catalyzes the dehydration of norsolorinic acid to form (1'S)-averantin. The norsolorinic acid reductases aflE and aflF may also play a role in the conversion of NOR to AVN. The cytochrome P450 monooxygenase aflG then catalyzes the hydroxylation of AVN to 5'hydroxyaverantin (HAVN). The next step is performed by the 5'-hydroxyaverantin dehydrogenase aflH that transforms HAVN to 5'-oxoaverantin (OAVN) which is further converted to averufin (AVF) by aflK that plays a dual role in the pathway, as a 5'-oxoaverantin cyclase that mediates conversion of 5'-oxoaverantin, as well as a versicolorin B synthase in a later step in the pathway. The averufin oxidase aflI catalyzes the conversion of AVF to versiconal hemiacetal acetate (VHA). VHA is then the substrate for the versiconal hemiacetal acetate esterase aflJ to yield versiconal (VAL). Versicolorin B synthase aflK then converts VAL to versicolorin B (VERB) by closing the bisfuran ring of aflatoxin which is required for DNA-binding, thus giving to aflatoxin its activity as a mutagen. Then, the activity of the versicolorin B desaturase aflL leads to versicolorin A (VERA). A branch point starts from VERB since it can also be converted to dihydrodemethylsterigmatocystin (DMDHST), probably also by aflL, VERA being a precursor for aflatoxins B1 and G1, and DMDHST for aflatoxins B2 and G2. Next, the versicolorin reductase aflM and the cytochrome P450 monooxygenase aflN are involved in conversion of VERA to demethylsterigmatocystin (DMST). AflX and aflY seem also involved in this step, through probable aflX-mediated epoxide ring-opening step following versicolorin A oxidation and aflY-mediated Baeyer-Villiger oxidation required for the formation of the xanthone ring. The methyltransferase aflO then leads to the modification of DMST to sterigmatocystin (ST), and of DMDHST to dihydrosterigmatocystin (DHST). Both ST and DHST are then substrates of the O-methyltransferase aflP to yield O-methylsterigmatocystin (OMST) and dihydro-O-methylsterigmatocystin (DHOMST), respectively. Finally OMST is converted to aflatoxins B1 and G1, and DHOMST to aflatoxins B2 and G2, via the action of several enzymes including O-methylsterigmatocystin oxidoreductase aflQ, the cytochrome P450 monooxygenase aflU, but also the NADH-dependent flavin oxidoreductase nadA which is specifically required for the synthesis of AFG1. The polypeptide is Norsolorinic acid reductase B (Aspergillus parasiticus (strain ATCC 56775 / NRRL 5862 / SRRC 143 / SU-1)).